Reading from the N-terminus, the 128-residue chain is Probable prefoldin subunit 6 (128 aa).

This sequence belongs to the prefoldin subunit beta family. Heterohexamer of two PFD-alpha type and four PFD-beta type subunits.

It localises to the cytoplasm. Binds specifically to cytosolic chaperonin (c-CPN) and transfers target proteins to it. Binds to nascent polypeptide chain and promotes folding in an environment in which there are many competing pathways for nonnative proteins. Required for positioning of the mitotic spindle. The chain is Probable prefoldin subunit 6 from Caenorhabditis briggsae.